A 66-amino-acid polypeptide reads, in one-letter code: Large ribosomal subunit protein bL33c (66 aa).

This sequence belongs to the bacterial ribosomal protein bL33 family.

The protein localises to the plastid. The protein resides in the chloroplast. The protein is Large ribosomal subunit protein bL33c of Ipomoea purpurea (Common morning glory).